The chain runs to 153 residues: Mitotic-spindle organizing protein 2 (153 aa).

Residues 80-153 form a disordered region; sequence KVSETSTGDA…SSSSSQLTSN (74 aa). Composition is skewed to polar residues over residues 81–99 and 107–133; these read VSET…TAVP and KMSS…SATR. Positions 134-153 are enriched in low complexity; it reads GQKSTKSSGSSSSSSQLTSN.

It belongs to the MOZART2 family. Part of the gamma-tubulin complex. Interacts with TUBG1.

It is found in the cytoplasm. Its subcellular location is the cytoskeleton. The protein resides in the microtubule organizing center. The protein localises to the centrosome. It localises to the spindle. The chain is Mitotic-spindle organizing protein 2 (mzt2) from Danio rerio (Zebrafish).